A 461-amino-acid chain; its full sequence is Fumarate hydratase class II (461 aa).

Substrate is bound by residues 99–101, Arg-127, 130–133, 140–142, and Thr-188; these read SGT, HPND, and SSN. His-189 functions as the Proton donor/acceptor in the catalytic mechanism. Residue Ser-319 is part of the active site. Residues Ser-320 and 325–327 each bind substrate; that span reads KVN.

This sequence belongs to the class-II fumarase/aspartase family. Fumarase subfamily. As to quaternary structure, homotetramer.

The protein resides in the cytoplasm. It carries out the reaction (S)-malate = fumarate + H2O. Its pathway is carbohydrate metabolism; tricarboxylic acid cycle; (S)-malate from fumarate: step 1/1. Involved in the TCA cycle. Catalyzes the stereospecific interconversion of fumarate to L-malate. This Chromobacterium violaceum (strain ATCC 12472 / DSM 30191 / JCM 1249 / CCUG 213 / NBRC 12614 / NCIMB 9131 / NCTC 9757 / MK) protein is Fumarate hydratase class II.